The chain runs to 74 residues: Large ribosomal subunit protein bL31 (74 aa).

Zn(2+)-binding residues include cysteine 16, cysteine 18, cysteine 38, and cysteine 41.

Belongs to the bacterial ribosomal protein bL31 family. Type A subfamily. As to quaternary structure, part of the 50S ribosomal subunit. It depends on Zn(2+) as a cofactor.

Binds the 23S rRNA. The polypeptide is Large ribosomal subunit protein bL31 (Salinispora arenicola (strain CNS-205)).